Consider the following 281-residue polypeptide: Pantothenate synthetase (281 aa).

Residue 30 to 37 participates in ATP binding; it reads MGNLHQGH. The Proton donor role is filled by H37. Q61 serves as a coordination point for (R)-pantoate. Residue Q61 participates in beta-alanine binding. 149 to 152 contacts ATP; that stretch reads GNKD. Q155 contributes to the (R)-pantoate binding site. ATP is bound by residues I178 and 186-189; that span reads MSSR.

This sequence belongs to the pantothenate synthetase family. Homodimer.

It localises to the cytoplasm. It catalyses the reaction (R)-pantoate + beta-alanine + ATP = (R)-pantothenate + AMP + diphosphate + H(+). The protein operates within cofactor biosynthesis; (R)-pantothenate biosynthesis; (R)-pantothenate from (R)-pantoate and beta-alanine: step 1/1. Functionally, catalyzes the condensation of pantoate with beta-alanine in an ATP-dependent reaction via a pantoyl-adenylate intermediate. The chain is Pantothenate synthetase from Shewanella sp. (strain ANA-3).